We begin with the raw amino-acid sequence, 150 residues long: Protein SLM6 (150 aa).

The Extracellular portion of the chain corresponds to 1–76 (MCSRFSSTSL…SLLRSGVFPS (76 aa)). The chain crosses the membrane as a helical span at residues 77–97 (WLFCMFSSILALAISNSFFFF). The Cytoplasmic segment spans residues 98-104 (SSNACFS). Residues 105–125 (LLFNSFLVTGFSFSADLLVLA) traverse the membrane as a helical segment. The Extracellular portion of the chain corresponds to 126–150 (AAADTLESNVSNDIGGNCATRLFKL).

The protein resides in the membrane. The sequence is that of Protein SLM6 from Saccharomyces cerevisiae (strain ATCC 204508 / S288c) (Baker's yeast).